The following is a 215-amino-acid chain: uncharacterized protein (215 aa).

It belongs to the thiaminase-2 family.

This is an uncharacterized protein from Haemophilus influenzae (strain ATCC 51907 / DSM 11121 / KW20 / Rd).